Reading from the N-terminus, the 371-residue chain is tRNA-specific 2-thiouridylase MnmA (371 aa).

Residues 7–14 and L33 contribute to the ATP site; that span reads AMSGGVDS. C101 functions as the Nucleophile in the catalytic mechanism. C101 and C213 are oxidised to a cystine. G125 lines the ATP pocket. The interaction with tRNA stretch occupies residues 163 to 165; that stretch reads KDQ. Catalysis depends on C213, which acts as the Cysteine persulfide intermediate.

This sequence belongs to the MnmA/TRMU family.

It localises to the cytoplasm. It carries out the reaction S-sulfanyl-L-cysteinyl-[protein] + uridine(34) in tRNA + AH2 + ATP = 2-thiouridine(34) in tRNA + L-cysteinyl-[protein] + A + AMP + diphosphate + H(+). In terms of biological role, catalyzes the 2-thiolation of uridine at the wobble position (U34) of tRNA, leading to the formation of s(2)U34. This chain is tRNA-specific 2-thiouridylase MnmA, found in Roseiflexus castenholzii (strain DSM 13941 / HLO8).